Here is a 284-residue protein sequence, read N- to C-terminus: Pantothenate synthetase (284 aa).

30 to 37 (MGNLHDGH) contributes to the ATP binding site. Histidine 37 acts as the Proton donor in catalysis. Glutamine 61 provides a ligand contact to (R)-pantoate. Glutamine 61 contributes to the beta-alanine binding site. Position 149-152 (149-152 (GEKD)) interacts with ATP. (R)-pantoate is bound at residue glutamine 155. ATP-binding positions include isoleucine 178 and 186–189 (LSSR).

This sequence belongs to the pantothenate synthetase family. In terms of assembly, homodimer.

It is found in the cytoplasm. It catalyses the reaction (R)-pantoate + beta-alanine + ATP = (R)-pantothenate + AMP + diphosphate + H(+). It participates in cofactor biosynthesis; (R)-pantothenate biosynthesis; (R)-pantothenate from (R)-pantoate and beta-alanine: step 1/1. Its function is as follows. Catalyzes the condensation of pantoate with beta-alanine in an ATP-dependent reaction via a pantoyl-adenylate intermediate. The sequence is that of Pantothenate synthetase from Salmonella typhi.